The following is a 383-amino-acid chain: Protein pelota homolog (383 aa).

This sequence belongs to the eukaryotic release factor 1 family. Pelota subfamily. In terms of assembly, component of the Pelota-HBS1L complex, also named Dom34-Hbs1 complex, composed of PELO and HBS1L. It depends on a divalent metal cation as a cofactor.

Its subcellular location is the cytoplasm. Functionally, component of the Pelota-HBS1L complex, a complex that recognizes stalled ribosomes and triggers the No-Go Decay (NGD) pathway. In the Pelota-HBS1L complex, PELO recognizes ribosomes stalled at the 3' end of an mRNA and engages stalled ribosomes by destabilizing mRNA in the mRNA channel. Following mRNA extraction from stalled ribosomes by the SKI complex, the Pelota-HBS1L complex promotes recruitment of ABCE1, which drives the disassembly of stalled ribosomes, followed by degradation of damaged mRNAs as part of the NGD pathway. The sequence is that of Protein pelota homolog (pelo) from Xenopus laevis (African clawed frog).